A 289-amino-acid polypeptide reads, in one-letter code: Pantothenate synthetase (289 aa).

Residue 33-40 (MGYLHEGH) coordinates ATP. The active-site Proton donor is His-40. Gln-70 lines the (R)-pantoate pocket. Gln-70 is a beta-alanine binding site. 157–160 (GEKD) contributes to the ATP binding site. Residue Gln-163 participates in (R)-pantoate binding. ATP is bound by residues Val-186 and 194 to 197 (LSSR).

Belongs to the pantothenate synthetase family. As to quaternary structure, homodimer.

The protein resides in the cytoplasm. The enzyme catalyses (R)-pantoate + beta-alanine + ATP = (R)-pantothenate + AMP + diphosphate + H(+). The protein operates within cofactor biosynthesis; (R)-pantothenate biosynthesis; (R)-pantothenate from (R)-pantoate and beta-alanine: step 1/1. In terms of biological role, catalyzes the condensation of pantoate with beta-alanine in an ATP-dependent reaction via a pantoyl-adenylate intermediate. The sequence is that of Pantothenate synthetase from Anaeromyxobacter dehalogenans (strain 2CP-C).